The chain runs to 429 residues: GTPase Obg (429 aa).

The region spanning 1–158 (MFVDHVKIYV…LNVILELKVL (158 aa)) is the Obg domain. The disordered stretch occupies residues 119–143 (AGRGGRGNSRFATPANPAPELSEKG). Residues 159-329 (ADVGLVGFPS…LLFAIADLLE (171 aa)) enclose the OBG-type G domain. GTP-binding positions include 165-172 (GFPSVGKS), 190-194 (FTTIV), 212-215 (DLPG), 282-285 (NKMD), and 310-312 (SAV). 2 residues coordinate Mg(2+): Ser172 and Thr192. In terms of domain architecture, OCT spans 351–429 (KHEAKGEDFE…LQEFEFEFVD (79 aa)).

The protein belongs to the TRAFAC class OBG-HflX-like GTPase superfamily. OBG GTPase family. As to quaternary structure, monomer. Mg(2+) serves as cofactor.

The protein resides in the cytoplasm. Its function is as follows. An essential GTPase which binds GTP, GDP and possibly (p)ppGpp with moderate affinity, with high nucleotide exchange rates and a fairly low GTP hydrolysis rate. Plays a role in control of the cell cycle, stress response, ribosome biogenesis and in those bacteria that undergo differentiation, in morphogenesis control. This is GTPase Obg from Lysinibacillus sphaericus (strain C3-41).